The chain runs to 317 residues: Prenyl transferase paxC (317 aa).

Residues Lys-53 and His-86 each coordinate substrate. Asp-93 and Asp-97 together coordinate Mg(2+). Arg-102, Lys-186, Thr-187, Gln-216, Asn-223, and Lys-233 together coordinate substrate.

This sequence belongs to the FPP/GGPP synthase family.

It participates in secondary metabolite biosynthesis. In terms of biological role, prenyl transferase; part of the gene cluster that mediates the biosynthesis of paxalline, a mycotoxin that acts as an inhibitor of mammalian maxi-K channels. PaxG, the geranylgeranyl diphosphate (GGPP) synthase is proposed to catalyze the first step in paxilline biosynthesis. Condensation of indole-3-glycerol phosphate with GGPP by paxC then forms 3-geranylgeranylindole (3-GGI), followed by epoxidation and cyclization of this intermediate (by paxM and paxB) to form paspaline. Paspaline is subsequently converted to 13-desoxypaxilline by paxP, the latter being then converted to paxilline by paxQ. Finally paxilline can be mono- and di-prenylated by paxD. The chain is Prenyl transferase paxC from Penicillium paxilli.